A 217-amino-acid polypeptide reads, in one-letter code: GRB2-related adapter protein (217 aa).

An SH3 1 domain is found at methionine 1 to histidine 58. In terms of domain architecture, SH2 spans tryptophan 60–leucine 154. The SH3 2 domain maps to proline 158–leucine 217.

This sequence belongs to the GRB2/sem-5/DRK family. Associates through its SH2 domain with ligand-activated receptors for stem cell factor (KIT) and erythropoietin (EPOR). Also forms a stable complex with the Bcr-Abl oncoprotein. GRAP is associated with the Ras guanine nucleotide exchange factor SOS1, primarily through its N-terminal SH3 domain. Interacts with phosphorylated LAT upon TCR activation. Interacts with SHB.

The protein resides in the membrane. Its subcellular location is the synapse. Couples signals from receptor and cytoplasmic tyrosine kinases to the Ras signaling pathway. Plays a role in the inner ear and in hearing. In Homo sapiens (Human), this protein is GRB2-related adapter protein.